The following is a 482-amino-acid chain: Cis-aconitate decarboxylase-like protein oryM (482 aa).

This sequence belongs to the PrpD family.

Its pathway is secondary metabolite biosynthesis. In terms of biological role, cis-aconitate decarboxylase-like protein; part of the gene cluster that mediates the biosynthesis of oryzines, natural products with an unusual maleidride backbone. The two subunits of the fungal fatty acid synthase oryfasA and oryfasB probably form octenoic acid. This fatty acid is most likely activated by the acyl-CoA ligase oryP to give octenyl-CoA before the citrate synthase-like protein oryE catalyzes condensation with oxaloacetate to form tricarboxylic acid. The next steps of the pathways are conjectural, but a favorite possible route has been proposed, beginning with decarboxylation and concomitant dehydration by the decarboxylase oryM, followed by tautomerization, which may lead to the production of a diene intermediate. Reduction of this diene intermediate could give the known metabolite piliformic acid. On the pathway to oryzine B and oryzine A, however, hydroxylation of the diene by the alpha-ketoglutarate-dependent dioxygenase oryG and lactonisation by the lactonohydrolases oryH or oryL could give oryzine B directly. Finally, enoyl reduction by the dehydrogenase oryD would then convert oryzine B into oryzine A. The chain is Cis-aconitate decarboxylase-like protein oryM from Aspergillus oryzae (strain ATCC 42149 / RIB 40) (Yellow koji mold).